A 135-amino-acid chain; its full sequence is MGLTSQLIPVLVCLLACTSHFVHGHKCDITLEEIIKTLNILTARKNSCMELPVADVFAAPKNTTEKETLCRAGIELRRIYRSHTCLNRFLSRLDRNLSGLASKTCSVNEAKTSTSTLKNLLERLKTIMKEKYSKC.

The first 24 residues, 1–24, serve as a signal peptide directing secretion; it reads MGLTSQLIPVLVCLLACTSHFVHG. 3 disulfide bridges follow: C27-C135, C48-C85, and C70-C105. N-linked (GlcNAc...) asparagine glycans are attached at residues N62 and N96.

Belongs to the IL-4/IL-13 family.

Its subcellular location is the secreted. Participates in at least several B-cell activation processes as well as of other cell types. It is a costimulator of DNA-synthesis. It induces the expression of class II MHC molecules on resting B-cells. It enhances both secretion and cell surface expression of IgE and IgG1. It also regulates the expression of the low affinity Fc receptor for IgE (CD23) on both lymphocytes and monocytes. Positively regulates IL31RA expression in macrophages. Stimulates autophagy in dendritic cells by interfering with mTORC1 signaling and through the induction of RUFY4. The sequence is that of Interleukin-4 (IL4) from Cervus elaphus (Red deer).